The following is a 344-amino-acid chain: Methylthioribose-1-phosphate isomerase (344 aa).

Substrate-binding positions include 55–57, Arg98, and Gln202; that span reads RGA. Asp243 (proton donor) is an active-site residue. 253 to 254 provides a ligand contact to substrate; that stretch reads NK.

The protein belongs to the eIF-2B alpha/beta/delta subunits family. MtnA subfamily.

It catalyses the reaction 5-(methylsulfanyl)-alpha-D-ribose 1-phosphate = 5-(methylsulfanyl)-D-ribulose 1-phosphate. It functions in the pathway amino-acid biosynthesis; L-methionine biosynthesis via salvage pathway; L-methionine from S-methyl-5-thio-alpha-D-ribose 1-phosphate: step 1/6. In terms of biological role, catalyzes the interconversion of methylthioribose-1-phosphate (MTR-1-P) into methylthioribulose-1-phosphate (MTRu-1-P). This is Methylthioribose-1-phosphate isomerase from Gemmatimonas aurantiaca (strain DSM 14586 / JCM 11422 / NBRC 100505 / T-27).